The following is a 422-amino-acid chain: MLDAKYLRENLEEVEARLATRGSEVSLGRFRELDERRRALLTESESLKALKNSVSEAISKVKDKSQIQDKIAEMREVGVRIKGLDDELRGIEDELQMVLLTVPNVPHPTVPVGASEADNRQVRTWGEPPCFAFDPKPHWEIGEGLGILDFERGAKLTGARFTLYRGAGARLERALVNFMLDLHTERHNYLEMLPPFVVNRESMTGTGQLPKFEDDLFHLEGVDYFLIPTAEVPVTNIHRAEILKAADLPLSYTAYTPCFRKEAGSYGKDVRGLIRQHQFNKVELVKFVHPATSYDELEKLLSNAEEVLRQLGLAYRVVELCTGDMGFSAAKTYDIEVWLPGQETYREISSCSNFEDFQSRRASIRFREDEKSKPEFVHTLNGSGLAVGRTLVAILENYQQEDGSVVIPDVLRPYMGGLQKIG.

Thr229–Glu231 lines the L-serine pocket. Arg260 to Glu262 is an ATP binding site. Residue Glu283 coordinates L-serine. Glu347–Ser350 is an ATP binding site. Ser383 contacts L-serine.

The protein belongs to the class-II aminoacyl-tRNA synthetase family. Type-1 seryl-tRNA synthetase subfamily. Homodimer. The tRNA molecule binds across the dimer.

It is found in the cytoplasm. It carries out the reaction tRNA(Ser) + L-serine + ATP = L-seryl-tRNA(Ser) + AMP + diphosphate + H(+). The catalysed reaction is tRNA(Sec) + L-serine + ATP = L-seryl-tRNA(Sec) + AMP + diphosphate + H(+). It functions in the pathway aminoacyl-tRNA biosynthesis; selenocysteinyl-tRNA(Sec) biosynthesis; L-seryl-tRNA(Sec) from L-serine and tRNA(Sec): step 1/1. Catalyzes the attachment of serine to tRNA(Ser). Is also able to aminoacylate tRNA(Sec) with serine, to form the misacylated tRNA L-seryl-tRNA(Sec), which will be further converted into selenocysteinyl-tRNA(Sec). In Geobacter sulfurreducens (strain ATCC 51573 / DSM 12127 / PCA), this protein is Serine--tRNA ligase.